The following is a 558-amino-acid chain: Membrane protein insertase YidC (558 aa).

Transmembrane regions (helical) follow at residues 3-23 (IKRTVLWVIFFMSAVMLFDNW), 364-384 (FVGNWGWAIVLLTLLIKAVFF), 438-458 (LPVVIQIPVFISLYWVLLASV), 477-497 (PYFILPVLMAVSMFVQTKLNP), and 508-528 (MMFMPIAFSVMFFFFPAGLVL).

Belongs to the OXA1/ALB3/YidC family. Type 1 subfamily. As to quaternary structure, interacts with the Sec translocase complex via SecD. Specifically interacts with transmembrane segments of nascent integral membrane proteins during membrane integration.

It localises to the cell inner membrane. Required for the insertion and/or proper folding and/or complex formation of integral membrane proteins into the membrane. Involved in integration of membrane proteins that insert both dependently and independently of the Sec translocase complex, as well as at least some lipoproteins. Aids folding of multispanning membrane proteins. This chain is Membrane protein insertase YidC, found in Burkholderia pseudomallei (strain 668).